We begin with the raw amino-acid sequence, 105 residues long: ATP synthase F(0) complex subunit a (105 aa).

3 helical membrane-spanning segments follow: residues 14–34 (EGTPVPLIPVLIIIETISLFI), 47–67 (LTAGHLLIQLIATAAFVLLPM), and 72–92 (AILTSIVLFLLTLLEIAVAMI).

This sequence belongs to the ATPase A chain family. As to quaternary structure, component of the ATP synthase complex composed at least of ATP5F1A/subunit alpha, ATP5F1B/subunit beta, ATP5MC1/subunit c (homooctomer), MT-ATP6/subunit a, MT-ATP8/subunit 8, ATP5ME/subunit e, ATP5MF/subunit f, ATP5MG/subunit g, ATP5MK/subunit k, ATP5MJ/subunit j, ATP5F1C/subunit gamma, ATP5F1D/subunit delta, ATP5F1E/subunit epsilon, ATP5PF/subunit F6, ATP5PB/subunit b, ATP5PD/subunit d, ATP5PO/subunit OSCP. ATP synthase complex consists of a soluble F(1) head domain (subunits alpha(3) and beta(3)) - the catalytic core - and a membrane F(0) domain - the membrane proton channel (subunits c, a, 8, e, f, g, k and j). These two domains are linked by a central stalk (subunits gamma, delta, and epsilon) rotating inside the F1 region and a stationary peripheral stalk (subunits F6, b, d, and OSCP). Interacts with DNAJC30; interaction is direct.

The protein resides in the mitochondrion inner membrane. The catalysed reaction is H(+)(in) = H(+)(out). In terms of biological role, subunit a, of the mitochondrial membrane ATP synthase complex (F(1)F(0) ATP synthase or Complex V) that produces ATP from ADP in the presence of a proton gradient across the membrane which is generated by electron transport complexes of the respiratory chain. ATP synthase complex consist of a soluble F(1) head domain - the catalytic core - and a membrane F(1) domain - the membrane proton channel. These two domains are linked by a central stalk rotating inside the F(1) region and a stationary peripheral stalk. During catalysis, ATP synthesis in the catalytic domain of F(1) is coupled via a rotary mechanism of the central stalk subunits to proton translocation. With the subunit c (ATP5MC1), forms the proton-conducting channel in the F(0) domain, that contains two crucial half-channels (inlet and outlet) that facilitate proton movement from the mitochondrial intermembrane space (IMS) into the matrix. Protons are taken up via the inlet half-channel and released through the outlet half-channel, following a Grotthuss mechanism. The sequence is that of ATP synthase F(0) complex subunit a from Salmo trutta (Brown trout).